Here is a 583-residue protein sequence, read N- to C-terminus: Proline--tRNA ligase (583 aa).

This sequence belongs to the class-II aminoacyl-tRNA synthetase family. ProS type 1 subfamily. In terms of assembly, homodimer.

Its subcellular location is the cytoplasm. The enzyme catalyses tRNA(Pro) + L-proline + ATP = L-prolyl-tRNA(Pro) + AMP + diphosphate. Catalyzes the attachment of proline to tRNA(Pro) in a two-step reaction: proline is first activated by ATP to form Pro-AMP and then transferred to the acceptor end of tRNA(Pro). As ProRS can inadvertently accommodate and process non-cognate amino acids such as alanine and cysteine, to avoid such errors it has two additional distinct editing activities against alanine. One activity is designated as 'pretransfer' editing and involves the tRNA(Pro)-independent hydrolysis of activated Ala-AMP. The other activity is designated 'posttransfer' editing and involves deacylation of mischarged Ala-tRNA(Pro). The misacylated Cys-tRNA(Pro) is not edited by ProRS. The protein is Proline--tRNA ligase of Methylococcus capsulatus (strain ATCC 33009 / NCIMB 11132 / Bath).